We begin with the raw amino-acid sequence, 487 residues long: MMTTPTLAPLTTADLAPLVPELVLIGGAFALLMLDLFVSQRNKVWTHLFSVAVLAVVLVLLATGTGGQGDIFNGMFVRDTAADVMKTVIVLVSGLSLVYGWTYLRERNLYQGEIPVLVLFATAGMMLLASAGSLLMVYLGLELLALCSYALVASNRDNGLATEAAMKYFVLGSLASGLLLYGMSLVYGATGTLSLAGIHDAIEGSNERTLLLTGTIFMIAGVAFKLGAAPFHMWLPDVYQGAPAPIALFISSAPKLAAFGMAYRLLEVGMGPLSPQWHLLIGGLSAVSLVVGNLMAIAQSNLKRMLAYSTVSHIGFLLMGVAGGGEEGYAAAMFYAVSYTIMSTASFGAIIALSRNGFEAENIDDFKGLNARNPWMAGLVLCIMASLAGIPPFLGFWTKLAVLGAAVKGDMLWLALVGVICAVIGAYYYLRVIKVMYFDEPVGEPLPANNDRVLGTVLGVNALALLALGLAWSPIMVWCQRAFAGLA.

13 consecutive transmembrane segments (helical) span residues 18 to 38, 44 to 64, 84 to 104, 116 to 136, 169 to 189, 211 to 231, 242 to 262, 277 to 297, 305 to 325, 333 to 353, 377 to 397, 410 to 430, and 457 to 477; these read LVPE…DLFV, VWTH…LATG, VMKT…WTYL, VLVL…SLLM, FVLG…VYGA, LLTG…AAPF, APAP…FGMA, WHLL…LMAI, MLAY…AGGG, MFYA…IIAL, AGLV…LGFW, DMLW…YYYL, and VLGV…PIMV.

Belongs to the complex I subunit 2 family. In terms of assembly, NDH-1 is composed of 14 different subunits. Subunits NuoA, H, J, K, L, M, N constitute the membrane sector of the complex.

The protein localises to the cell inner membrane. The catalysed reaction is a quinone + NADH + 5 H(+)(in) = a quinol + NAD(+) + 4 H(+)(out). Its function is as follows. NDH-1 shuttles electrons from NADH, via FMN and iron-sulfur (Fe-S) centers, to quinones in the respiratory chain. The immediate electron acceptor for the enzyme in this species is believed to be ubiquinone. Couples the redox reaction to proton translocation (for every two electrons transferred, four hydrogen ions are translocated across the cytoplasmic membrane), and thus conserves the redox energy in a proton gradient. The protein is NADH-quinone oxidoreductase subunit N of Xanthomonas euvesicatoria pv. vesicatoria (strain 85-10) (Xanthomonas campestris pv. vesicatoria).